Reading from the N-terminus, the 591-residue chain is Vomeromodulin (591 aa).

A signal peptide spans 1–18 (MWVLQALAIMLSIQAGTL). The tract at residues 151-172 (NEGNGDSSKPSSGSKATGGLGQ) is disordered. 2 N-linked (GlcNAc...) asparagine glycosylation sites follow: asparagine 421 and asparagine 516.

Post-translationally, N-glycosylated. The N-glycans consist mainly of complex sialylated and fucosylated biantennary structures. Expressed in lung. Not detected in other tissues tested (at protein level).

It localises to the secreted. This chain is Vomeromodulin, found in Mus musculus (Mouse).